The following is a 146-amino-acid chain: 3-hydroxyacyl-[acyl-carrier-protein] dehydratase FabZ (146 aa).

H51 is an active-site residue.

Belongs to the thioester dehydratase family. FabZ subfamily.

Its subcellular location is the cytoplasm. It catalyses the reaction a (3R)-hydroxyacyl-[ACP] = a (2E)-enoyl-[ACP] + H2O. Involved in unsaturated fatty acids biosynthesis. Catalyzes the dehydration of short chain beta-hydroxyacyl-ACPs and long chain saturated and unsaturated beta-hydroxyacyl-ACPs. The sequence is that of 3-hydroxyacyl-[acyl-carrier-protein] dehydratase FabZ from Staphylococcus aureus (strain Mu3 / ATCC 700698).